Consider the following 339-residue polypeptide: Anthranilate phosphoribosyltransferase (339 aa).

5-phospho-alpha-D-ribose 1-diphosphate is bound by residues Gly-82, 85–86 (GD), Thr-90, 92–95 (NIST), 110–118 (KHGNRSASG), and Ser-122. Position 82 (Gly-82) interacts with anthranilate. Ser-94 provides a ligand contact to Mg(2+). Residue Asn-113 coordinates anthranilate. An anthranilate-binding site is contributed by Arg-168. Residues Asp-226 and Glu-227 each coordinate Mg(2+).

It belongs to the anthranilate phosphoribosyltransferase family. In terms of assembly, homodimer. It depends on Mg(2+) as a cofactor.

The catalysed reaction is N-(5-phospho-beta-D-ribosyl)anthranilate + diphosphate = 5-phospho-alpha-D-ribose 1-diphosphate + anthranilate. The protein operates within amino-acid biosynthesis; L-tryptophan biosynthesis; L-tryptophan from chorismate: step 2/5. Its function is as follows. Catalyzes the transfer of the phosphoribosyl group of 5-phosphorylribose-1-pyrophosphate (PRPP) to anthranilate to yield N-(5'-phosphoribosyl)-anthranilate (PRA). The protein is Anthranilate phosphoribosyltransferase of Methanosphaerula palustris (strain ATCC BAA-1556 / DSM 19958 / E1-9c).